The following is a 90-amino-acid chain: Probable oxaloacetate decarboxylase gamma chain 2 (90 aa).

Residues 10-32 (GINLLTLGMGFVFIFLIFLVYAT) traverse the membrane as a helical segment.

The protein belongs to the OadG family. Heterotrimer of an alpha, a beta and a gamma subunit. Na(+) serves as cofactor.

It is found in the cell membrane. The catalysed reaction is oxaloacetate + 2 Na(+)(in) + H(+) = pyruvate + 2 Na(+)(out) + CO2. In terms of biological role, catalyzes the decarboxylation of oxaloacetate coupled to Na(+) translocation. The polypeptide is Probable oxaloacetate decarboxylase gamma chain 2 (oadG2) (Vibrio cholerae serotype O1 (strain ATCC 39315 / El Tor Inaba N16961)).